Here is a 143-residue protein sequence, read N- to C-terminus: Transcriptional regulator MraZ (143 aa).

SpoVT-AbrB domains follow at residues T5 to E47 and A76 to A119.

This sequence belongs to the MraZ family. In terms of assembly, forms oligomers.

It is found in the cytoplasm. The protein resides in the nucleoid. In Corynebacterium efficiens (strain DSM 44549 / YS-314 / AJ 12310 / JCM 11189 / NBRC 100395), this protein is Transcriptional regulator MraZ.